The chain runs to 295 residues: NAD kinase (295 aa).

Asp74 acts as the Proton acceptor in catalysis. NAD(+) contacts are provided by residues 74-75 (DG), 148-149 (ND), His159, Arg176, Asp178, and 189-194 (TAYALS).

This sequence belongs to the NAD kinase family. Requires a divalent metal cation as cofactor.

The protein resides in the cytoplasm. It catalyses the reaction NAD(+) + ATP = ADP + NADP(+) + H(+). Involved in the regulation of the intracellular balance of NAD and NADP, and is a key enzyme in the biosynthesis of NADP. Catalyzes specifically the phosphorylation on 2'-hydroxyl of the adenosine moiety of NAD to yield NADP. The protein is NAD kinase of Legionella pneumophila (strain Paris).